Reading from the N-terminus, the 328-residue chain is Alcohol-sensitive RING finger protein 1 (328 aa).

An RING-type 1; atypical zinc finger spans residues 18–61; sequence CSICWESMPSGVGRLMPCGHEYHLACIRKWFHLHSGNRSCPVCR. An RING-type 2; atypical zinc finger spans residues 129–177; it reads CGICGEMNGDIDTCCNRCHHMYHHSCLGQLLVEVNAEREQGWSHCIFCY.

The protein resides in the cytoplasm. Its subcellular location is the nucleus. Functionally, required for tolerance to alcohol. This Eremothecium gossypii (strain ATCC 10895 / CBS 109.51 / FGSC 9923 / NRRL Y-1056) (Yeast) protein is Alcohol-sensitive RING finger protein 1 (ASR1).